Here is a 275-residue protein sequence, read N- to C-terminus: Exosome complex component RRP40 (275 aa).

An N-acetylalanine modification is found at Ala2. Residue Lys151 forms a Glycyl lysine isopeptide (Lys-Gly) (interchain with G-Cter in SUMO2) linkage.

Belongs to the RRP40 family. Component of the RNA exosome core complex (Exo-9), composed of EXOSC1, EXOSC2, EXOSC3, EXOSC4, EXOSC5, EXOSC6, EXOSC7, EXOSC8 and EXOSC9; within the complex interacts with EXOSC5 and EXOSC9. The catalytically inactive RNA exosome core complex (Exo-9) associates with the catalytic subunit EXOSC10/RRP6. Exo-9 may associate with DIS3 to form the nucleolar exosome complex, or DIS3L to form the cytoplasmic exosome complex. Exo-9 is formed by a hexameric base ring consisting of the heterodimers EXOSC4-EXOSC9, EXOSC5-EXOSC8 and EXOSC6-EXOSC7, and a cap ring consisting of EXOSC1, EXOSC2 and EXOSC3. The RNA exosome complex associates with cofactors C1D/RRP47, MPHOSPH6/MPP6 and MTREX/MTR4. Interacts with MPHOSPH6/MPP6; the interaction is direct. Interacts with GTPBP1. Interacts with ZC3HAV1. Interacts with DDX17 only in the presence of ZC3HAV1 in an RNA-independent manner. Interacts with DHX36; this interaction occurs in a RNase-insensitive manner. Interacts with HBS1L isoform 2.

Its subcellular location is the cytoplasm. It localises to the nucleus. The protein localises to the nucleolus. In terms of biological role, non-catalytic component of the RNA exosome complex which has 3'-&gt;5' exoribonuclease activity and participates in a multitude of cellular RNA processing and degradation events. In the nucleus, the RNA exosome complex is involved in proper maturation of stable RNA species such as rRNA, snRNA and snoRNA, in the elimination of RNA processing by-products and non-coding 'pervasive' transcripts, such as antisense RNA species and promoter-upstream transcripts (PROMPTs), and of mRNAs with processing defects, thereby limiting or excluding their export to the cytoplasm. The RNA exosome may be involved in Ig class switch recombination (CSR) and/or Ig variable region somatic hypermutation (SHM) by targeting AICDA deamination activity to transcribed dsDNA substrates. In the cytoplasm, the RNA exosome complex is involved in general mRNA turnover and specifically degrades inherently unstable mRNAs containing AU-rich elements (AREs) within their 3' untranslated regions, and in RNA surveillance pathways, preventing translation of aberrant mRNAs. It seems to be involved in degradation of histone mRNA. The catalytic inactive RNA exosome core complex of 9 subunits (Exo-9) is proposed to play a pivotal role in the binding and presentation of RNA for ribonucleolysis, and to serve as a scaffold for the association with catalytic subunits and accessory proteins or complexes. EXOSC3 as peripheral part of the Exo-9 complex stabilizes the hexameric ring of RNase PH-domain subunits through contacts with EXOSC9 and EXOSC5. This is Exosome complex component RRP40 (EXOSC3) from Homo sapiens (Human).